We begin with the raw amino-acid sequence, 204 residues long: Guanylate kinase (204 aa).

The region spanning 16–196 (AKVIIFSAPS…AKAHALKVIK (181 aa)) is the Guanylate kinase-like domain. Residue 23-30 (APSGSGKS) coordinates ATP.

Belongs to the guanylate kinase family.

The protein localises to the cytoplasm. It carries out the reaction GMP + ATP = GDP + ADP. Functionally, essential for recycling GMP and indirectly, cGMP. In Bacteroides fragilis (strain ATCC 25285 / DSM 2151 / CCUG 4856 / JCM 11019 / LMG 10263 / NCTC 9343 / Onslow / VPI 2553 / EN-2), this protein is Guanylate kinase.